The chain runs to 144 residues: Putative pre-16S rRNA nuclease (144 aa).

Belongs to the YqgF nuclease family.

The protein localises to the cytoplasm. Its function is as follows. Could be a nuclease involved in processing of the 5'-end of pre-16S rRNA. The chain is Putative pre-16S rRNA nuclease from Ralstonia nicotianae (strain ATCC BAA-1114 / GMI1000) (Ralstonia solanacearum).